The chain runs to 439 residues: tRNA modification GTPase MnmE (439 aa).

3 residues coordinate (6S)-5-formyl-5,6,7,8-tetrahydrofolate: Arg-20, Glu-78, and Lys-116. Residues 211 to 364 (GIYVAILGEP…LLSAIQKKVE (154 aa)) enclose the TrmE-type G domain. GTP-binding positions include 221-226 (NSGKST), 240-246 (SEYAGTT), and 265-268 (DTAG). Mg(2+)-binding residues include Ser-225 and Thr-246. Lys-439 contributes to the (6S)-5-formyl-5,6,7,8-tetrahydrofolate binding site.

The protein belongs to the TRAFAC class TrmE-Era-EngA-EngB-Septin-like GTPase superfamily. TrmE GTPase family. As to quaternary structure, homodimer. Heterotetramer of two MnmE and two MnmG subunits. Requires K(+) as cofactor.

The protein resides in the cytoplasm. Its function is as follows. Exhibits a very high intrinsic GTPase hydrolysis rate. Involved in the addition of a carboxymethylaminomethyl (cmnm) group at the wobble position (U34) of certain tRNAs, forming tRNA-cmnm(5)s(2)U34. This is tRNA modification GTPase MnmE from Ehrlichia ruminantium (strain Gardel).